The sequence spans 1098 residues: MSQPNSQGQSNLAKFAFNIYGTLSTNSSTPQSHEISPSSSLGSSRSNKQTNQYSSQETNNNRLSYYCEKEIMSLSQLNYPLSIGGYNGDLQHHVVIGGKNYLRLLCVSETQQRIISDINLLESKSIYNSRATNKLINVNTIKTYADTIAAGLSNGVVLIYRVSPNGQSKVVGKYSDHSRTINSLDFIDSENQLLSGSQDGTIKLWDLRSSSTKPVMTIQANLHSDPIRACQYSRHSAVRNKICVLSVHDSGALCKFDLRTKNGGKVYSPEKKWNLHTGPVLSLHIHPEKEYVVTGGRDKRISVFNYGDGQSRNTPDSLINTYGPVVKVRWSTYANTKEIVEEFEENQQPNPNPLYNYDIACSYLNDDPTIAIYNLGRKFIPKQIIHSKKPVQNFIWAQNNSKSRKIWTLSKPNSFNSYNLYGLDDSDVSRPIEDLSNVAMTWDNNNDFCAVSQARYDYDLESFGNAINETYEDNYDTERNCSLDNEEFVHSQANSLTASPIEKPQLTRSMTYNPVQSFSTFSPAPVARTATGFLQNEPVTPSSSSSIPNMHLSSSRPKLTRNTSQTTQDSSSSQLSSVIPPPSSSQTYSSPQYKRNQSSRCLNTPAYVIPVSIPVPSNDEYVFQKLSSESLVNIPDGFTLVDVCLINASVAASVNNNRTSQVWKLLAVSIQEEFESGSKLRRILGPETETVSKIPQEVHESLAKTNEALSSDIAKSNSVSSVLGNFVESFKSTSTSGSQFGKQNDKDDRKLQNKNSSGNLMDMINKASRNSSFSTTSFRLKEQERREHELRNTQNFRDENEKVSTHSKSAPISISSHPEDLDDENMSATNSAGLKSSPPSVGVSIPSTRTFSSSLASSPKSIRIMNGVNSNVARSQPSPPVQTWLKQRNFDVSNGVTMMGTSGLSLALKRNKTNEEGCEFVKVWKFKSLLRKSLDYAALQGDIIFCSTVALLFYDIVPDVISQFECLEWLSIYIEILQRKRLFVNAINVIKCATADIQEKLQKLYCSDLSLRFYCSRCQALLVNDKSKFSGKGEFGYWYCDECSRLQSQCVYCNEPCKGLAVTVGLKCGHQGHFGCLKEWFIEDQNTECPGGCDYQVI.

Residues 26 to 57 (NSSTPQSHEISPSSSLGSSRSNKQTNQYSSQE) are disordered. Over residues 32–46 (SHEISPSSSLGSSRS) the composition is skewed to low complexity. Over residues 47–57 (NKQTNQYSSQE) the composition is skewed to polar residues. WD repeat units lie at residues 131 to 170 (ATNKLINVNTIKTYADTIAAGLSNGVVLIYRVSPNGQSKV), 176 to 215 (DHSRTINSLDFIDSENQLLSGSQDGTIKLWDLRSSSTKPV), 222 to 266 (LHSD…GGKV), 275 to 314 (LHTGPVLSLHIHPEKEYVVTGGRDKRISVFNYGDGQSRNT), 367 to 417 (DPTI…SFNS), and 432 to 473 (IEDL…TYED). Polar residues predominate over residues 535 to 562 (QNEPVTPSSSSSIPNMHLSSSRPKLTRN). The disordered stretch occupies residues 535–597 (QNEPVTPSSS…YSSPQYKRNQ (63 aa)). Residues 563–593 (TSQTTQDSSSSQLSSVIPPPSSSQTYSSPQY) show a composition bias toward low complexity. The WD 7 repeat unit spans residues 635 to 673 (PDGFTLVDVCLINASVAASVNNNRTSQVWKLLAVSIQEE). A compositionally biased stretch (polar residues) spans 731 to 742 (KSTSTSGSQFGK). The tract at residues 731–843 (KSTSTSGSQF…LKSSPPSVGV (113 aa)) is disordered. Over residues 768–778 (SRNSSFSTTSF) the composition is skewed to low complexity. Residues 779–804 (RLKEQERREHELRNTQNFRDENEKVS) are compositionally biased toward basic and acidic residues. Residues 806 to 816 (HSKSAPISISS) are compositionally biased toward polar residues. The WD 8 repeat unit spans residues 891–934 (DVSNGVTMMGTSGLSLALKRNKTNEEGCEFVKVWKFKSLLRKSL). The RING-type; degenerate zinc finger occupies 1050-1093 (CVYCNEPCKGLAVTVGLKCGHQGHFGCLKEWFIEDQNTECPGGC).

Belongs to the WD repeat RTC1 family.

Its subcellular location is the vacuole. Functionally, may be involved in a process influencing telomere capping. The chain is Restriction of telomere capping protein 1 (RTC1) from Candida dubliniensis (strain CD36 / ATCC MYA-646 / CBS 7987 / NCPF 3949 / NRRL Y-17841) (Yeast).